A 142-amino-acid polypeptide reads, in one-letter code: Large ribosomal subunit protein uL11 (142 aa).

The protein belongs to the universal ribosomal protein uL11 family. In terms of assembly, part of the ribosomal stalk of the 50S ribosomal subunit. Interacts with L10 and the large rRNA to form the base of the stalk. L10 forms an elongated spine to which L12 dimers bind in a sequential fashion forming a multimeric L10(L12)X complex. Post-translationally, one or more lysine residues are methylated.

Functionally, forms part of the ribosomal stalk which helps the ribosome interact with GTP-bound translation factors. This Mycoplasma mycoides subsp. mycoides SC (strain CCUG 32753 / NCTC 10114 / PG1) protein is Large ribosomal subunit protein uL11.